A 131-amino-acid polypeptide reads, in one-letter code: NADPH-dependent 7-cyano-7-deazaguanine reductase (131 aa).

The active-site Thioimide intermediate is the Cys47. The active-site Proton donor is Asp54. Residues 69 to 71 (MEL) and 88 to 89 (HE) contribute to the substrate site.

Belongs to the GTP cyclohydrolase I family. QueF type 1 subfamily.

The protein localises to the cytoplasm. The catalysed reaction is 7-aminomethyl-7-carbaguanine + 2 NADP(+) = 7-cyano-7-deazaguanine + 2 NADPH + 3 H(+). It participates in tRNA modification; tRNA-queuosine biosynthesis. In terms of biological role, catalyzes the NADPH-dependent reduction of 7-cyano-7-deazaguanine (preQ0) to 7-aminomethyl-7-deazaguanine (preQ1). The sequence is that of NADPH-dependent 7-cyano-7-deazaguanine reductase from Microcystis aeruginosa (strain NIES-843 / IAM M-2473).